A 125-amino-acid chain; its full sequence is uncharacterized protein (125 aa).

Positions 19 to 73 (IYSLRLAKGLSRQQLAEVIDVTHQQLQKYEKAINRISVGRLVLIAEALDRNIDYF) constitute an HTH cro/C1-type domain. The segment at residues 30-49 (RQQLAEVIDVTHQQLQKYEK) is a DNA-binding region (H-T-H motif).

This is an uncharacterized protein from Rickettsia conorii (strain ATCC VR-613 / Malish 7).